The sequence spans 951 residues: 2-oxoglutarate dehydrogenase E1 component (951 aa).

A disordered region spans residues 906–925; the sequence is RRRRSSPAEGNPTAHKQEQA.

This sequence belongs to the alpha-ketoglutarate dehydrogenase family. As to quaternary structure, homodimer. Part of the 2-oxoglutarate dehydrogenase (OGDH) complex composed of E1 (2-oxoglutarate dehydrogenase), E2 (dihydrolipoamide succinyltransferase) and E3 (dihydrolipoamide dehydrogenase); the complex contains multiple copies of the three enzymatic components (E1, E2 and E3). The cofactor is thiamine diphosphate.

The catalysed reaction is N(6)-[(R)-lipoyl]-L-lysyl-[protein] + 2-oxoglutarate + H(+) = N(6)-[(R)-S(8)-succinyldihydrolipoyl]-L-lysyl-[protein] + CO2. Functionally, E1 component of the 2-oxoglutarate dehydrogenase (OGDH) complex which catalyzes the decarboxylation of 2-oxoglutarate, the first step in the conversion of 2-oxoglutarate to succinyl-CoA and CO(2). The chain is 2-oxoglutarate dehydrogenase E1 component from Exiguobacterium sp. (strain ATCC BAA-1283 / AT1b).